The chain runs to 296 residues: Cbb3-type cytochrome c oxidase subunit CcoP (296 aa).

Over M1–K31 the chain is Cytoplasmic. A helical membrane pass occupies residues W32–P52. At A53–K296 the chain is on the periplasmic side. Cytochrome c domains are found at residues F108–N200 and G207–G293. The heme c site is built by C121, C124, H125, M175, C220, C223, H224, and M270.

It belongs to the CcoP / FixP family. As to quaternary structure, component of the cbb3-type cytochrome c oxidase at least composed of CcoN, CcoO, CcoQ and CcoP. Requires heme c as cofactor.

The protein localises to the cell inner membrane. Its pathway is energy metabolism; oxidative phosphorylation. Its function is as follows. C-type cytochrome. Part of the cbb3-type cytochrome c oxidase complex. CcoP subunit is required for transferring electrons from donor cytochrome c via its heme groups to CcoO subunit. From there, electrons are shuttled to the catalytic binuclear center of CcoN subunit where oxygen reduction takes place. The complex also functions as a proton pump. This Azospirillum sp. (strain B510) protein is Cbb3-type cytochrome c oxidase subunit CcoP.